Consider the following 98-residue polypeptide: Large ribosomal subunit protein uL23 (98 aa).

Belongs to the universal ribosomal protein uL23 family. In terms of assembly, part of the 50S ribosomal subunit. Contacts protein L29, and trigger factor when it is bound to the ribosome.

Its function is as follows. One of the early assembly proteins it binds 23S rRNA. One of the proteins that surrounds the polypeptide exit tunnel on the outside of the ribosome. Forms the main docking site for trigger factor binding to the ribosome. This is Large ribosomal subunit protein uL23 from Bifidobacterium animalis subsp. lactis (strain AD011).